A 339-amino-acid polypeptide reads, in one-letter code: Dihydroorotate dehydrogenase (quinone) (339 aa).

FMN-binding positions include 62–66 and T86; that span reads AGLDK. Residue K66 participates in substrate binding. 111–115 lines the substrate pocket; that stretch reads NRMGF. N139 and N172 together coordinate FMN. N172 lines the substrate pocket. Catalysis depends on S175, which acts as the Nucleophile. N177 lines the substrate pocket. FMN is bound by residues K217 and T245. 246–247 contacts substrate; the sequence is NT. FMN is bound by residues G268, G297, and 318–319; that span reads YS.

It belongs to the dihydroorotate dehydrogenase family. Type 2 subfamily. In terms of assembly, monomer. It depends on FMN as a cofactor.

The protein resides in the cell membrane. It catalyses the reaction (S)-dihydroorotate + a quinone = orotate + a quinol. It participates in pyrimidine metabolism; UMP biosynthesis via de novo pathway; orotate from (S)-dihydroorotate (quinone route): step 1/1. Functionally, catalyzes the conversion of dihydroorotate to orotate with quinone as electron acceptor. The polypeptide is Dihydroorotate dehydrogenase (quinone) (Shewanella amazonensis (strain ATCC BAA-1098 / SB2B)).